Reading from the N-terminus, the 95-residue chain is Neutrophil antibiotic peptide NP-4 (95 aa).

Residues 1–19 (MRTLALLAAILLVTLQAQA) form the signal peptide. A propeptide spanning residues 20-62 (ELHSGMADDGVDQQQPRAQDLDVAVYIKQDETSPLEVLGAKAG) is cleaved from the precursor. 3 disulfides stabilise this stretch: Cys65/Cys93, Cys67/Cys82, and Cys72/Cys92.

This sequence belongs to the alpha-defensin family.

It is found in the secreted. Its function is as follows. Microbicidal activity. The protein is Neutrophil antibiotic peptide NP-4 of Oryctolagus cuniculus (Rabbit).